The following is a 425-amino-acid chain: Sensor histidine kinase NarS (425 aa).

The next 6 membrane-spanning stretches (helical) occupy residues 42–62, 71–91, 107–127, 130–150, 155–175, and 181–201; these read IASVLRIGVVGLMVAAMVVGT, IVLIGVYAVAALWALLLAYSA, LEPFAFTAVDVLILTGFQLLS, GIYPLLIMILLPVLVGLDVST, VVLACTLVGFAVAVLGDPVML, and PETIFRFALYAFLCATALMVV. In terms of domain architecture, Histidine kinase spans 224–425; that stretch reads QTMTASEVLQ…HVCVELPLKR (202 aa). At H241 the chain carries Phosphohistidine; by autocatalysis.

In terms of processing, autophosphorylated on His-241.

It localises to the cell membrane. It catalyses the reaction ATP + protein L-histidine = ADP + protein N-phospho-L-histidine.. Member of the two-component regulatory system NarS/NarL involved in gene expression during aerobic nitrate metabolism. Plays therefore a crucial role in anaerobic survival of mycobacteria in host. Functions as a sensor protein kinase which is autophosphorylated at a histidine residue and transfers its phosphate group to the conserved aspartic acid residue in the regulatory domain of NarL. In turn, NarL binds to the upstream promoter regions of target genes to regulate their expression during aerobic nitrate metabolism. The polypeptide is Sensor histidine kinase NarS (Mycobacterium tuberculosis (strain ATCC 25618 / H37Rv)).